The primary structure comprises 685 residues: ATP-dependent zinc metalloprotease FTSH 8, chloroplastic (685 aa).

A chloroplast-targeting transit peptide spans 1–37 (MAASSACLLGNGLSVYTTKQRFQKLGLDRTSKVTVVK). A thylakoid-targeting transit peptide spans 38–73 (ASLDEKKHEGRRGFFKLLLGNAAAGVGLLASGNANA). The Lumenal, thylakoid segment spans residues 38–161 (ASLDEKKHEG…HNAQEDQGSP (124 aa)). A helical membrane pass occupies residues 162-182 (ILNLIGNLAFPVILIGGLFLL). Residues 183–685 (SRRSSGGMGG…STSTPTPASV (503 aa)) lie on the Stromal side of the membrane. 260 to 267 (GPPGTGKT) serves as a coordination point for ATP. Position 481 (histidine 481) interacts with Zn(2+). Residue glutamate 482 is part of the active site. Histidine 485 and aspartate 559 together coordinate Zn(2+).

In the N-terminal section; belongs to the AAA ATPase family. This sequence in the C-terminal section; belongs to the peptidase M41 family. In terms of assembly, heterohexamers with FTSH1, FTSH2 and FTSH5. May also form homooligomers. The cofactor is Zn(2+). As to expression, expressed in cotyledons, cauline and rosette leaves, stems, sepals, flovers and siliques. Very low in roots.

The protein resides in the plastid. It is found in the chloroplast thylakoid membrane. Functionally, part of a complex that function as an ATP-dependent zinc metallopeptidase. Involved in the thylakoid formation and in the removal of damaged D1 in the photosystem II, preventing cell death under high-intensity light conditions. This chain is ATP-dependent zinc metalloprotease FTSH 8, chloroplastic (FTSH8), found in Arabidopsis thaliana (Mouse-ear cress).